Consider the following 137-residue polypeptide: Profilin-3 (137 aa).

It belongs to the profilin family. Interacts with ACTRT3. Detected in round spermatids.

Its subcellular location is the cytoplasm. The protein resides in the cytoskeleton. The protein localises to the nucleus. Binds to actin and affects the structure of the cytoskeleton. Slightly reduces actin polymerization. Binds to poly-L-proline, phosphatidylinositol 3-phosphate (PtdIns(3)P), phosphatidylinositol 4,5-bisphosphate (PtdIns(4,5)P2), and phosphatidylinositol 4-phosphate (PtdIns(4)P). May be involved in spermatogenesis. In Rattus norvegicus (Rat), this protein is Profilin-3 (Pfn3).